Here is a 179-residue protein sequence, read N- to C-terminus: Large ribosomal subunit protein uL6 (179 aa).

The protein belongs to the universal ribosomal protein uL6 family. Part of the 50S ribosomal subunit.

Functionally, this protein binds to the 23S rRNA, and is important in its secondary structure. It is located near the subunit interface in the base of the L7/L12 stalk, and near the tRNA binding site of the peptidyltransferase center. The sequence is that of Large ribosomal subunit protein uL6 from Mycobacterium sp. (strain KMS).